The following is a 161-amino-acid chain: ATP synthase subunit b (161 aa).

The chain crosses the membrane as a helical span at residues 10 to 29; it reads AVVQLLNFLFLLWILNKLLY.

This sequence belongs to the ATPase B chain family. In terms of assembly, F-type ATPases have 2 components, F(1) - the catalytic core - and F(0) - the membrane proton channel. F(1) has five subunits: alpha(3), beta(3), gamma(1), delta(1), epsilon(1). F(0) has three main subunits: a(1), b(2) and c(10-14). The alpha and beta chains form an alternating ring which encloses part of the gamma chain. F(1) is attached to F(0) by a central stalk formed by the gamma and epsilon chains, while a peripheral stalk is formed by the delta and b chains.

It is found in the cell inner membrane. F(1)F(0) ATP synthase produces ATP from ADP in the presence of a proton or sodium gradient. F-type ATPases consist of two structural domains, F(1) containing the extramembraneous catalytic core and F(0) containing the membrane proton channel, linked together by a central stalk and a peripheral stalk. During catalysis, ATP synthesis in the catalytic domain of F(1) is coupled via a rotary mechanism of the central stalk subunits to proton translocation. Functionally, component of the F(0) channel, it forms part of the peripheral stalk, linking F(1) to F(0). In Fervidobacterium nodosum (strain ATCC 35602 / DSM 5306 / Rt17-B1), this protein is ATP synthase subunit b.